A 393-amino-acid polypeptide reads, in one-letter code: Stearoyl-[acyl-carrier-protein] 9-desaturase, chloroplastic (393 aa).

Residues 1–31 (MASMVAFRPEAFLCFSPPKTTRSTRSPRISM) constitute a chloroplast transit peptide. Residues Glu135, Glu173, His176, Glu226, Glu259, and His262 each contribute to the Fe cation site.

This sequence belongs to the fatty acid desaturase type 2 family. Homodimer. Fe(2+) serves as cofactor.

Its subcellular location is the plastid. It localises to the chloroplast. It carries out the reaction octadecanoyl-[ACP] + 2 reduced [2Fe-2S]-[ferredoxin] + O2 + 2 H(+) = (9Z)-octadecenoyl-[ACP] + 2 oxidized [2Fe-2S]-[ferredoxin] + 2 H2O. Its pathway is lipid metabolism; fatty acid metabolism. Its function is as follows. Converts stearoyl-ACP to oleoyl-ACP by introduction of a cis double bond between carbons 9 and 10 of the acyl chain. The chain is Stearoyl-[acyl-carrier-protein] 9-desaturase, chloroplastic from Elaeis guineensis var. tenera (Oil palm).